A 465-amino-acid chain; its full sequence is Ribulose bisphosphate carboxylase large chain (465 aa).

N6,N6,N6-trimethyllysine is present on Lys-4. Residues Asn-113 and Thr-163 each contribute to the substrate site. Catalysis depends on Lys-165, which acts as the Proton acceptor. Substrate is bound at residue Lys-167. 3 residues coordinate Mg(2+): Lys-191, Asp-193, and Glu-194. The residue at position 191 (Lys-191) is an N6-carboxylysine. His-284 functions as the Proton acceptor in the catalytic mechanism. 3 residues coordinate substrate: Arg-285, His-317, and Ser-369.

This sequence belongs to the RuBisCO large chain family. Type I subfamily. Heterohexadecamer of 8 large chains and 8 small chains; disulfide-linked. The disulfide link is formed within the large subunit homodimers. The cofactor is Mg(2+). The disulfide bond which can form in the large chain dimeric partners within the hexadecamer appears to be associated with oxidative stress and protein turnover.

It is found in the plastid. The protein resides in the chloroplast. It catalyses the reaction 2 (2R)-3-phosphoglycerate + 2 H(+) = D-ribulose 1,5-bisphosphate + CO2 + H2O. The catalysed reaction is D-ribulose 1,5-bisphosphate + O2 = 2-phosphoglycolate + (2R)-3-phosphoglycerate + 2 H(+). Functionally, ruBisCO catalyzes two reactions: the carboxylation of D-ribulose 1,5-bisphosphate, the primary event in carbon dioxide fixation, as well as the oxidative fragmentation of the pentose substrate in the photorespiration process. Both reactions occur simultaneously and in competition at the same active site. The sequence is that of Ribulose bisphosphate carboxylase large chain from Epacris sp.